We begin with the raw amino-acid sequence, 269 residues long: Transmembrane protein 41B (269 aa).

Transmembrane regions (helical) follow at residues 30–50 (TSLLILVSIFTIAAFLMFLVY), 87–107 (FYVQVLVAYFATYVFLQTFAI), 125–147 (LALFLVCLCSGLGASFCYMLSYL), 175–195 (LINYIIFLRITPFLPNWFINI), 203–223 (PLKVFFIGTFLGVAPPSFVAI), and 240–260 (SWNSLFVLMILAILSILPALF). Residues 118 to 229 (GFLYPFPLAL…FVAIKAGTTL (112 aa)) form a VTT domain; required for its function in autophagy region.

This sequence belongs to the TMEM41 family.

It localises to the endoplasmic reticulum membrane. The protein resides in the endomembrane system. It carries out the reaction a 1,2-diacyl-sn-glycero-3-phospho-L-serine(in) = a 1,2-diacyl-sn-glycero-3-phospho-L-serine(out). The catalysed reaction is cholesterol(in) = cholesterol(out). The enzyme catalyses a 1,2-diacyl-sn-glycero-3-phosphocholine(in) = a 1,2-diacyl-sn-glycero-3-phosphocholine(out). It catalyses the reaction a 1,2-diacyl-sn-glycero-3-phosphoethanolamine(in) = a 1,2-diacyl-sn-glycero-3-phosphoethanolamine(out). Functionally, phospholipid scramblase involved in lipid homeostasis and membrane dynamics processes. Has phospholipid scramblase activity toward cholesterol and phosphatidylserine, as well as phosphatidylethanolamine and phosphatidylcholine. Required for autophagosome formation: participates in early stages of autophagosome biogenesis at the endoplasmic reticulum (ER) membrane by reequilibrating the leaflets of the ER as lipids are extracted by ATG2 (ATG2A or ATG2B) to mediate autophagosome assembly. In addition to autophagy, involved in other processes in which phospholipid scramblase activity is required. Required for normal motor neuron development. This Gallus gallus (Chicken) protein is Transmembrane protein 41B.